A 932-amino-acid chain; its full sequence is Protocadherin gamma-A7 (932 aa).

Residues 1 to 28 (MAAQPRGGDCRGFVLLSILLGTPWEAWA) form the signal peptide. 6 Cadherin domains span residues 29 to 133 (GRIL…VPRF), 134 to 242 (LTEE…TPVF), 243 to 347 (SLPQ…APEV), 348 to 452 (TMTS…PPTF), 453 to 562 (PHSS…PPEI), and 570 to 682 (DGST…EPSD). The Extracellular portion of the chain corresponds to 29-692 (GRILYSVSEE…GPYNYDLTLY (664 aa)). Residues Asn-419 and Asn-545 are each glycosylated (N-linked (GlcNAc...) asparagine). Residues 693-713 (LVVAVAAVSCVFLAFVLVLLA) form a helical membrane-spanning segment. Topologically, residues 714–932 (LRLRRWHKSR…KKKSGKKEKK (219 aa)) are cytoplasmic. Disordered regions lie at residues 804 to 841 (VPSI…WPNN) and 902 to 932 (ATLT…KEKK). Residues 806–841 (SIQQAPPNTDWRFSQAQRPGTSGSQNGDDTGTWPNN) are compositionally biased toward polar residues. The segment covering 922–932 (NKKKSGKKEKK) has biased composition (basic residues).

It is found in the cell membrane. In terms of biological role, potential calcium-dependent cell-adhesion protein. May be involved in the establishment and maintenance of specific neuronal connections in the brain. The chain is Protocadherin gamma-A7 (PCDHGA7) from Pan troglodytes (Chimpanzee).